The following is a 247-amino-acid chain: Adenosylcobinamide-GDP ribazoletransferase (247 aa).

The next 6 membrane-spanning stretches (helical) occupy residues 31–51, 57–77, 109–129, 136–156, 189–209, and 218–238; these read VVWF…AAAL, PWLG…GLHL, FGVI…HWLL, PALV…TLLL, ITPI…WMWL, and ILGA…GVSL.

This sequence belongs to the CobS family. It depends on Mg(2+) as a cofactor.

The protein resides in the cell inner membrane. The catalysed reaction is alpha-ribazole + adenosylcob(III)inamide-GDP = adenosylcob(III)alamin + GMP + H(+). It carries out the reaction alpha-ribazole 5'-phosphate + adenosylcob(III)inamide-GDP = adenosylcob(III)alamin 5'-phosphate + GMP + H(+). Its pathway is cofactor biosynthesis; adenosylcobalamin biosynthesis; adenosylcobalamin from cob(II)yrinate a,c-diamide: step 7/7. In terms of biological role, joins adenosylcobinamide-GDP and alpha-ribazole to generate adenosylcobalamin (Ado-cobalamin). Also synthesizes adenosylcobalamin 5'-phosphate from adenosylcobinamide-GDP and alpha-ribazole 5'-phosphate. The polypeptide is Adenosylcobinamide-GDP ribazoletransferase (Thiobacillus denitrificans (strain ATCC 25259 / T1)).